A 90-amino-acid polypeptide reads, in one-letter code: DNA/RNA-binding protein Alba (90 aa).

Lys8 carries the N6-acetyllysine modification.

This sequence belongs to the histone-like Alba family. Post-translationally, acetylated. Acetylation at Lys-8 decreases DNA-binding affinity.

Its subcellular location is the cytoplasm. The protein localises to the chromosome. In terms of biological role, binds double-stranded DNA tightly but without sequence specificity. Involved in DNA compaction. The protein is DNA/RNA-binding protein Alba of Nanoarchaeum equitans (strain Kin4-M).